The following is a 381-amino-acid chain: S-adenosylmethionine synthase (381 aa).

Histidine 15 provides a ligand contact to ATP. Aspartate 17 provides a ligand contact to Mg(2+). K(+) is bound at residue glutamate 43. Glutamate 56 and glutamine 99 together coordinate L-methionine. Residues glutamine 99–arginine 109 are flexible loop. ATP contacts are provided by residues aspartate 164 to lysine 166, arginine 230 to phenylalanine 231, aspartate 239, arginine 245 to lysine 246, alanine 262, and lysine 266. L-methionine is bound at residue aspartate 239. Lysine 270 contributes to the L-methionine binding site.

This sequence belongs to the AdoMet synthase family. In terms of assembly, homotetramer; dimer of dimers. The cofactor is Mg(2+). K(+) is required as a cofactor.

The protein resides in the cytoplasm. The enzyme catalyses L-methionine + ATP + H2O = S-adenosyl-L-methionine + phosphate + diphosphate. Its pathway is amino-acid biosynthesis; S-adenosyl-L-methionine biosynthesis; S-adenosyl-L-methionine from L-methionine: step 1/1. Its function is as follows. Catalyzes the formation of S-adenosylmethionine (AdoMet) from methionine and ATP. The overall synthetic reaction is composed of two sequential steps, AdoMet formation and the subsequent tripolyphosphate hydrolysis which occurs prior to release of AdoMet from the enzyme. The protein is S-adenosylmethionine synthase of Alteromonas mediterranea (strain DSM 17117 / CIP 110805 / LMG 28347 / Deep ecotype).